Here is a 2237-residue protein sequence, read N- to C-terminus: Activating signal cointegrator 1 complex subunit 3-like (2237 aa).

Disordered stretches follow at residues 1–48 (MSEE…RGEM), 71–118 (TIEK…KPID), 242–330 (DEEE…SKLI), and 445–472 (EKTI…DEIK). A compositionally biased stretch (basic and acidic residues) spans 24–37 (ERNRSELKEPKGEP). Residues 79–97 (VNSSNDTYSTTKKVKNQNP) show a composition bias toward polar residues. A compositionally biased stretch (low complexity) spans 105-114 (RKSNGNNNNE). Positions 242–282 (DEEEEEENLSDFEIRDDDDDDDDVDNNEVDDNNNNDSEAQD) are enriched in acidic residues. Basic and acidic residues-rich tracts occupy residues 312–325 (QKPD…DKNN) and 446–460 (KTIE…DVEM). Residues 440–468 (TAATTEKTIEKTESNKKDVEMKQQQQQQQ) are a coiled coil. The Helicase ATP-binding 1 domain maps to 561–745 (DCAFKTDNNL…FLRVEPDGVF (185 aa)). An ATP-binding site is contributed by 574–581 (APTSSGKT). Positions 687-690 (DEIH) match the DEAH box motif. A Helicase C-terminal 1 domain is found at 755 to 990 (PLEQQYIGIS…TVRDAVNWLG (236 aa)). In terms of domain architecture, SEC63 1 spans 1050 to 1356 (STELGKVASH…GAEYSLPISF (307 aa)). Residues 1407-1584 (NCMYQSNDNA…WIGATPQTCY (178 aa)) enclose the Helicase ATP-binding 2 domain. ATP is bound at residue 1420-1427 (APTNSGKT). Positions 1526-1529 (DELH) match the DEAH box motif. The Helicase C-terminal 2 domain occupies 1657–1832 (TLTKPYLVCE…TITKKQDALD (176 aa)). In terms of domain architecture, SEC63 2 spans 1892-2215 (PLNLGIIASY…GCDQEHELNI (324 aa)).

This sequence belongs to the helicase family.

The sequence is that of Activating signal cointegrator 1 complex subunit 3-like (ascc3l) from Dictyostelium discoideum (Social amoeba).